The primary structure comprises 214 residues: uncharacterized protein (214 aa).

A run of 7 helical transmembrane segments spans residues 4–23 (VSIVEIFLIISLPLLFFSSF), 35–57 (SFVHGAVLAVPLLLLRSFFLGYY), 67–89 (QWMRFFLFDYVFPLFCLPFFLFT), 96–118 (VSLVSGVSALFGAYTSFFFVHVY), 128–150 (ARVMTLVLYMTNLLQLHAHVSFS), 155–177 (LPLLGLIAALCIFLLMGAFSATV), and 187–209 (TVVYTSMLAGAGGVALLTHFFAV).

The protein localises to the cell membrane. This is an uncharacterized protein from Treponema pallidum (strain Nichols).